The sequence spans 255 residues: Myb-related protein Zm38 (255 aa).

HTH myb-type domains follow at residues 9–61 (KAHT…INYL) and 62–116 (RPDL…RRKL). 2 consecutive DNA-binding regions (H-T-H motif) follow at residues 37-61 (WRSL…INYL) and 89-112 (WSLI…NTHV).

The protein resides in the nucleus. Functionally, transcription factor that negatively regulates genes involved in anthocyanin biosynthesis. This Zea mays (Maize) protein is Myb-related protein Zm38.